A 250-amino-acid polypeptide reads, in one-letter code: Small ribosomal subunit protein uS2 (250 aa).

Belongs to the universal ribosomal protein uS2 family.

This is Small ribosomal subunit protein uS2 from Paraburkholderia phymatum (strain DSM 17167 / CIP 108236 / LMG 21445 / STM815) (Burkholderia phymatum).